We begin with the raw amino-acid sequence, 935 residues long: Potassium channel AKT1 (935 aa).

At 1–106 (MARWGAARMA…YDRRYRIWET (106 aa)) the chain is on the cytoplasmic side. A helical transmembrane segment spans residues 107–127 (FLIVLVVYSAWVSPFEFGFIP). Over 128 to 136 (KPTGALATA) the chain is Extracellular. Residues 137–157 (DNVVNAFFAVDIILTFFVAYL) form a helical membrane-spanning segment. Topologically, residues 158 to 178 (DKMSYMLEDDPKKIAWRYSTT) are cytoplasmic. The chain crosses the membrane as a helical span at residues 179–199 (WLVLDVASTIPSEFARRILPS). The Extracellular segment spans residues 200 to 205 (KLRSYG). A helical; Voltage-sensor membrane pass occupies residues 206-226 (FFNMLRLWRLRRVSSLFSRLE). Residues 227 to 240 (KDRHFNYFWVRCAK) lie on the Cytoplasmic side of the membrane. The helical transmembrane segment at 241-261 (LICVTLFAVHCAACFYYLLAD) threads the bilayer. Residues 262-288 (RYPVPTSTWIGNYMADFHERSLWIRYV) are Extracellular-facing. The pore-forming intramembrane region spans 289–308 (TSVYWSITTLTTVGYGDLHA). Topologically, residues 309–312 (ENTR) are extracellular. A helical membrane pass occupies residues 313 to 333 (EMIFNIFYMLFNLGLTAYLIG). Residues 334–935 (NMTNLVVHGT…WDAEKMKGKS (602 aa)) lie on the Cytoplasmic side of the membrane. 419-538 (LFQGVSNDLI…TIIMNNLIQF (120 aa)) provides a ligand contact to a nucleoside 3',5'-cyclic phosphate. ANK repeat units lie at residues 565 to 594 (DLPI…DPNE), 598 to 627 (DGHT…DPNA), 631 to 660 (EGKV…DLSS), 662 to 691 (DTGL…DVNR), 695 to 724 (DGTT…DIDK), and 728 to 757 (NGWT…ATAS). The tract at residues 826–854 (SQAQRETDHPLSRGGLAATGSPNPSSGSR) is disordered. Residues 845–854 (GSPNPSSGSR) are compositionally biased toward polar residues. In terms of domain architecture, KHA spans 859–935 (RVTISCPEKG…WDAEKMKGKS (77 aa)).

This sequence belongs to the potassium channel family. Plant (TC 1.A.1.4) subfamily. As to quaternary structure, the potassium channel is probably a homo- or heterotetrameric complex of pore-forming subunits. In terms of tissue distribution, highly expressed in the epidermis and endodermis of roots, and at lower level in cells of the vasculature and the cortex. Expressed in xylem parenchyma, phloem and mesophyll cells of leaves.

It localises to the membrane. Its function is as follows. Highly selective inward-rectifying potassium channel that mediates potassium uptake by plant roots. The protein is Potassium channel AKT1 (AKT1) of Oryza sativa subsp. indica (Rice).